A 301-amino-acid chain; its full sequence is Transmembrane protein 178A (301 aa).

A signal peptide spans 1–25 (MEKRALVTAISLSMSLLALMLLVTA). The Extracellular segment spans residues 26 to 183 (IFTDHWYETD…LLHLRRITAG (158 aa)). A glycan (N-linked (GlcNAc...) asparagine) is linked at Asn162. A helical transmembrane segment spans residues 184-204 (FLGMAAAVMLCGSIVAAVGFF). At 205-215 (WEESLTQHVSG) the chain is on the cytoplasmic side. The helical transmembrane segment at 216 to 236 (LLFLMAGIFCTISLCTYAASV) threads the bilayer. The Extracellular portion of the chain corresponds to 237–258 (SYDLSRNPPFIYGLPSDVDHGY). A helical transmembrane segment spans residues 259-279 (GWSIFCAWVSLGLTVASGCIC). Over 280–301 (TTYPFLSRTKALRSKTARESSV) the chain is Cytoplasmic.

The protein belongs to the TMEM178 family.

The protein localises to the endoplasmic reticulum membrane. In terms of biological role, may act as a negative regulator of osteoclast differentiation. The protein is Transmembrane protein 178A (tmem178a) of Danio rerio (Zebrafish).